The chain runs to 478 residues: Protein nucleotidyltransferase YdiU (478 aa).

Gly84, Gly86, Arg87, Lys107, Asp119, Gly120, Arg170, and Arg177 together coordinate ATP. Residue Asp246 is the Proton acceptor of the active site. Mg(2+)-binding residues include Asn247 and Asp256. Asp256 contacts ATP.

Belongs to the SELO family. Mg(2+) serves as cofactor. Requires Mn(2+) as cofactor.

It carries out the reaction L-seryl-[protein] + ATP = 3-O-(5'-adenylyl)-L-seryl-[protein] + diphosphate. It catalyses the reaction L-threonyl-[protein] + ATP = 3-O-(5'-adenylyl)-L-threonyl-[protein] + diphosphate. The enzyme catalyses L-tyrosyl-[protein] + ATP = O-(5'-adenylyl)-L-tyrosyl-[protein] + diphosphate. The catalysed reaction is L-histidyl-[protein] + UTP = N(tele)-(5'-uridylyl)-L-histidyl-[protein] + diphosphate. It carries out the reaction L-seryl-[protein] + UTP = O-(5'-uridylyl)-L-seryl-[protein] + diphosphate. It catalyses the reaction L-tyrosyl-[protein] + UTP = O-(5'-uridylyl)-L-tyrosyl-[protein] + diphosphate. In terms of biological role, nucleotidyltransferase involved in the post-translational modification of proteins. It can catalyze the addition of adenosine monophosphate (AMP) or uridine monophosphate (UMP) to a protein, resulting in modifications known as AMPylation and UMPylation. This chain is Protein nucleotidyltransferase YdiU, found in Escherichia coli (strain SE11).